Consider the following 119-residue polypeptide: Integration host factor subunit beta (119 aa).

Positions 93 to 119 (AGGLADTQPDGDAPDQPQPTLLGLHAM) are disordered. The segment covering 97 to 112 (ADTQPDGDAPDQPQPT) has biased composition (low complexity).

The protein belongs to the bacterial histone-like protein family. As to quaternary structure, heterodimer of an alpha and a beta chain.

In terms of biological role, this protein is one of the two subunits of integration host factor, a specific DNA-binding protein that functions in genetic recombination as well as in transcriptional and translational control. This is Integration host factor subunit beta from Bordetella petrii (strain ATCC BAA-461 / DSM 12804 / CCUG 43448).